A 122-amino-acid polypeptide reads, in one-letter code: MRQIAEMRKEVSQHGFDVRMMEVPGMKVAIAGDGEVNYLFMLLPFRDKFKLKKRDVWLFKKLSYKFKARPFLVTFDKMLSFYPLHALEEGGEHFELDIRNSRGLMFSFDTIVSEQLQQRLVV.

This is an uncharacterized protein from Methanothermobacter thermautotrophicus (Methanobacterium thermoformicicum).